The primary structure comprises 122 residues: Large ribosomal subunit protein uL14 (122 aa).

The protein belongs to the universal ribosomal protein uL14 family. In terms of assembly, part of the 50S ribosomal subunit. Forms a cluster with proteins L3 and L19. In the 70S ribosome, L14 and L19 interact and together make contacts with the 16S rRNA in bridges B5 and B8.

In terms of biological role, binds to 23S rRNA. Forms part of two intersubunit bridges in the 70S ribosome. The sequence is that of Large ribosomal subunit protein uL14 from Xanthomonas oryzae pv. oryzae (strain MAFF 311018).